A 346-amino-acid chain; its full sequence is 3 beta-hydroxysteroid dehydrogenase/Delta 5--&gt;4-isomerase (346 aa).

Residue tyrosine 147 is the Proton acceptor of the active site. Lysine 151 provides a ligand contact to NAD(+).

Belongs to the 3-beta-HSD family.

It carries out the reaction a 3beta-hydroxy-Delta(5)-steroid + NAD(+) = a 3-oxo-Delta(5)-steroid + NADH + H(+). The catalysed reaction is a 3-oxo-Delta(5)-steroid = a 3-oxo-Delta(4)-steroid. It functions in the pathway lipid metabolism; steroid biosynthesis. In terms of biological role, catalyzes the oxidative conversion of Delta(5)-ene-3-beta-hydroxy steroid, and the oxidative conversion of ketosteroids. The 3-beta-HSD enzymatic system plays a crucial role in the biosynthesis of all classes of hormonal steroids. During viral infection, steroid production contributes to virulence by inhibiting the host inflammatory response. This is 3 beta-hydroxysteroid dehydrogenase/Delta 5--&gt;4-isomerase (OPG174) from Homo sapiens (Human).